A 348-amino-acid chain; its full sequence is MVADVLRQSVLVPISMYPQYPVPRRYTTSVFKEYQKKKKIYYCQRCLNHDVPRPRKNHKCECPYADCTCEKCGLVEKRRILNIRLQNYNQFNIENENDSKLIIVEDDDKKKQGERVPNCQKCGQHGRKSRLKGHKRSCPFRECPCAKCAVVSERQKLMADQIKIRRRQRKDTLLTFAKNSITSTMFPSNQISLNALNSLLYGSINTSPQPLLSSPTSSDASSCSPSMPFTPSIPMFMPTSADCSPTTQTPTSSIPSSIASTSPLMTSLPLRLSGFPLLNIRDPSAEASLLNLGCNADAAALLKTILDQYRMLEEASMSMSSSPSKDDESGDEDSDGLNSNSIIDVITV.

DNA-binding regions (DM) lie at residues 43–91 and 119–166; these read CQRC…YNQF and CQKC…KIRR. The disordered stretch occupies residues 316-348; the sequence is SMSMSSSPSKDDESGDEDSDGLNSNSIIDVITV.

Belongs to the DMRT family. As to expression, dimorphically expressed in the dimorphically connected interneuron AVG; expression is observed in the AVG in males, but not in hermaphrodites.

The protein resides in the nucleus. In terms of biological role, transcription factor. Plays a role in neuronal signaling in polymodal sensory neuron ASH, downstream of sensory receptor activation. Required for maintenance of AVG synapses. In Caenorhabditis elegans, this protein is Doublesex- and mab-3-related transcription factor dmd-10.